The following is a 351-amino-acid chain: MSGLPPLTIRLCGPRGFCAGVDRAIQIVLLALKKYSAPVYVRHEIVHNRYVVEGLQQRGAVFVEELDEIPEEHRNQPVVFSAHGVPKSVSEEARRYNLFYLDATCPLVSKVHKQAIRHQRHGRHVILIGHAGHPEVIGTMGQLEDGAVTLIETIEDALHYQPGDPDKLGFVTQTTLSVEDTAGILDVLQQRFPTLAAPAAESICYATTNRQDAVKAAAKGSDLFLIVGAPNSSNSRRLVEVAEKSGARQAILVQRADEINFENLKALSVVSLSAGASAPEIIIDEIISAFRARYNVTIELAETVVETERFLVSRELRDVILTSQDMAFVNGQANNAKNENQNTDMFTTKAE.

Residue Cys-18 participates in [4Fe-4S] cluster binding. (2E)-4-hydroxy-3-methylbut-2-enyl diphosphate contacts are provided by His-47 and His-83. The dimethylallyl diphosphate site is built by His-47 and His-83. Isopentenyl diphosphate is bound by residues His-47 and His-83. Cys-105 is a binding site for [4Fe-4S] cluster. A (2E)-4-hydroxy-3-methylbut-2-enyl diphosphate-binding site is contributed by His-133. Dimethylallyl diphosphate is bound at residue His-133. His-133 is an isopentenyl diphosphate binding site. The active-site Proton donor is Glu-135. Residue Thr-174 coordinates (2E)-4-hydroxy-3-methylbut-2-enyl diphosphate. Residue Cys-204 coordinates [4Fe-4S] cluster. The (2E)-4-hydroxy-3-methylbut-2-enyl diphosphate site is built by Ser-232, Ser-233, Asn-234, and Ser-277. Positions 232, 233, 234, and 277 each coordinate dimethylallyl diphosphate. Isopentenyl diphosphate contacts are provided by Ser-232, Ser-233, Asn-234, and Ser-277.

Belongs to the IspH family. It depends on [4Fe-4S] cluster as a cofactor.

The enzyme catalyses isopentenyl diphosphate + 2 oxidized [2Fe-2S]-[ferredoxin] + H2O = (2E)-4-hydroxy-3-methylbut-2-enyl diphosphate + 2 reduced [2Fe-2S]-[ferredoxin] + 2 H(+). The catalysed reaction is dimethylallyl diphosphate + 2 oxidized [2Fe-2S]-[ferredoxin] + H2O = (2E)-4-hydroxy-3-methylbut-2-enyl diphosphate + 2 reduced [2Fe-2S]-[ferredoxin] + 2 H(+). It participates in isoprenoid biosynthesis; dimethylallyl diphosphate biosynthesis; dimethylallyl diphosphate from (2E)-4-hydroxy-3-methylbutenyl diphosphate: step 1/1. Its pathway is isoprenoid biosynthesis; isopentenyl diphosphate biosynthesis via DXP pathway; isopentenyl diphosphate from 1-deoxy-D-xylulose 5-phosphate: step 6/6. In terms of biological role, catalyzes the conversion of 1-hydroxy-2-methyl-2-(E)-butenyl 4-diphosphate (HMBPP) into a mixture of isopentenyl diphosphate (IPP) and dimethylallyl diphosphate (DMAPP). Acts in the terminal step of the DOXP/MEP pathway for isoprenoid precursor biosynthesis. The protein is 4-hydroxy-3-methylbut-2-enyl diphosphate reductase of Bartonella tribocorum (strain CIP 105476 / IBS 506).